We begin with the raw amino-acid sequence, 445 residues long: Methylenetetrahydrofolate--tRNA-(uracil-5-)-methyltransferase TrmFO (445 aa).

Residue 10 to 15 coordinates FAD; it reads GGGLAG.

This sequence belongs to the MnmG family. TrmFO subfamily. FAD is required as a cofactor.

It localises to the cytoplasm. It carries out the reaction uridine(54) in tRNA + (6R)-5,10-methylene-5,6,7,8-tetrahydrofolate + NADH + H(+) = 5-methyluridine(54) in tRNA + (6S)-5,6,7,8-tetrahydrofolate + NAD(+). The catalysed reaction is uridine(54) in tRNA + (6R)-5,10-methylene-5,6,7,8-tetrahydrofolate + NADPH + H(+) = 5-methyluridine(54) in tRNA + (6S)-5,6,7,8-tetrahydrofolate + NADP(+). Functionally, catalyzes the folate-dependent formation of 5-methyl-uridine at position 54 (M-5-U54) in all tRNAs. This Microcystis aeruginosa (strain NIES-843 / IAM M-2473) protein is Methylenetetrahydrofolate--tRNA-(uracil-5-)-methyltransferase TrmFO.